The following is a 721-amino-acid chain: Long-chain-fatty-acid--CoA ligase ACSBG1 (721 aa).

The segment at 1–64 (MPRGSEAGYC…SHGLELSAPE (64 aa)) is disordered. Over residues 26 to 52 (QQGASLGTSQDNSQTSSLIDGQTLSKE) the composition is skewed to polar residues. A phosphoserine mark is found at S34, S50, S53, and S70. Residues 279-287 (TSGTTGNPK), 469-474 (AGYGLS), D547, and R562 each bind ATP. Phosphotyrosine is present on Y655. K698 serves as a coordination point for ATP.

It belongs to the ATP-dependent AMP-binding enzyme family. Bubblegum subfamily. As to expression, mainly expressed in brain. Also expressed in adrenal gland and testis. In brain, it is present in cerebral cortical and cerebellar neurons and in steroidogenic cells of the adrenal gland, testis and ovary (at protein level).

Its subcellular location is the cytoplasm. The protein resides in the cytoplasmic vesicle. It localises to the microsome. The protein localises to the endoplasmic reticulum. It is found in the cell membrane. The catalysed reaction is a long-chain fatty acid + ATP + CoA = a long-chain fatty acyl-CoA + AMP + diphosphate. It carries out the reaction (E)-hexadec-2-enoate + ATP + CoA = (2E)-hexadecenoyl-CoA + AMP + diphosphate. It catalyses the reaction hexadecanoate + ATP + CoA = hexadecanoyl-CoA + AMP + diphosphate. Catalyzes the conversion of fatty acids such as long-chain and very long-chain fatty acids to their active form acyl-CoAs for both synthesis of cellular lipids, and degradation via beta-oxidation. Can activate diverse saturated, monosaturated and polyunsaturated fatty acids. The sequence is that of Long-chain-fatty-acid--CoA ligase ACSBG1 from Mus musculus (Mouse).